Consider the following 200-residue polypeptide: Recombination protein RecR (200 aa).

Residues 59–74 form a C4-type zinc finger; that stretch reads CDICGNVCETSPCPVC. The Toprim domain occupies 82-177; that stretch reads SVICVVEEPK…KVTRLASGLP (96 aa).

This sequence belongs to the RecR family.

May play a role in DNA repair. It seems to be involved in an RecBC-independent recombinational process of DNA repair. It may act with RecF and RecO. The chain is Recombination protein RecR from Bifidobacterium adolescentis (strain ATCC 15703 / DSM 20083 / NCTC 11814 / E194a).